The sequence spans 155 residues: Crossover junction endodeoxyribonuclease RuvC (155 aa).

Active-site residues include D7, E68, and D140. Positions 7, 68, and 140 each coordinate Mg(2+).

This sequence belongs to the RuvC family. Homodimer which binds Holliday junction (HJ) DNA. The HJ becomes 2-fold symmetrical on binding to RuvC with unstacked arms; it has a different conformation from HJ DNA in complex with RuvA. In the full resolvosome a probable DNA-RuvA(4)-RuvB(12)-RuvC(2) complex forms which resolves the HJ. Mg(2+) is required as a cofactor.

The protein resides in the cytoplasm. It carries out the reaction Endonucleolytic cleavage at a junction such as a reciprocal single-stranded crossover between two homologous DNA duplexes (Holliday junction).. Functionally, the RuvA-RuvB-RuvC complex processes Holliday junction (HJ) DNA during genetic recombination and DNA repair. Endonuclease that resolves HJ intermediates. Cleaves cruciform DNA by making single-stranded nicks across the HJ at symmetrical positions within the homologous arms, yielding a 5'-phosphate and a 3'-hydroxyl group; requires a central core of homology in the junction. The consensus cleavage sequence is 5'-(A/T)TT(C/G)-3'. Cleavage occurs on the 3'-side of the TT dinucleotide at the point of strand exchange. HJ branch migration catalyzed by RuvA-RuvB allows RuvC to scan DNA until it finds its consensus sequence, where it cleaves and resolves the cruciform DNA. The polypeptide is Crossover junction endodeoxyribonuclease RuvC (Prochlorococcus marinus (strain SARG / CCMP1375 / SS120)).